Reading from the N-terminus, the 619-residue chain is Xyloglucan galactosyltransferase MUR3 (619 aa).

Positions 1–26 are disordered; sequence MFPRVSMRRRSAEVSPTEPMEKGNGK. Over 1 to 33 the chain is Cytoplasmic; it reads MFPRVSMRRRSAEVSPTEPMEKGNGKNQTNRIC. The chain crosses the membrane as a helical; Signal-anchor for type II membrane protein span at residues 34–54; that stretch reads LLVALSLFFWALLLYFHFVVL. Residues 55–619 are Lumenal-facing; the sequence is GTSNIDKQLQ…WKSEQRDKTQ (565 aa). 7 N-linked (GlcNAc...) asparagine glycosylation sites follow: N116, N146, N231, N257, N319, N465, and N482. The disordered stretch occupies residues 576-619; it reads HVWDPFFSKPKPGEDGSSDGNGGTTISADAAKNSWKSEQRDKTQ. A compositionally biased stretch (basic and acidic residues) spans 610–619; sequence WKSEQRDKTQ.

Belongs to the glycosyltransferase 47 family. As to quaternary structure, interacts with CSLC4 and FUT1. Ubiquitous.

It localises to the golgi apparatus. Its subcellular location is the golgi stack membrane. The protein resides in the golgi apparatus membrane. Involved in the attachment of the Gal residue on the third xylosyl unit within the XXXG core structure of xyloglucan, the principal glycan that interlaces the cellulose microfibrils in plant cell wall. Associates with other xyloglucan-synthesizing enzymes to form multiprotein complexes for xyloglucan synthesis in the Golgi. Interacts with actin and is required for the proper endomembrane organization and for the cell elongation. Not involved in the trafficking from the endoplasmic reticulum to the vacuoles. Involved in salt stress tolerance. Participates in the control of the expression of genes encoding for proteins involved in reactive oxygen species (ROS) detoxification under salt stress. May contribute to the maintenance of the proper organization of actin microfilaments during salt stress-induced ROS production. The polypeptide is Xyloglucan galactosyltransferase MUR3 (Arabidopsis thaliana (Mouse-ear cress)).